The sequence spans 293 residues: Pyridoxal 5'-phosphate synthase subunit PdxS (293 aa).

Asp23 lines the D-ribose 5-phosphate pocket. Lys80 (schiff-base intermediate with D-ribose 5-phosphate) is an active-site residue. Gly152 provides a ligand contact to D-ribose 5-phosphate. Arg164 contributes to the D-glyceraldehyde 3-phosphate binding site. Residues Gly213 and Gly234–Ser235 each bind D-ribose 5-phosphate.

Belongs to the PdxS/SNZ family. In terms of assembly, in the presence of PdxT, forms a dodecamer of heterodimers.

It carries out the reaction aldehydo-D-ribose 5-phosphate + D-glyceraldehyde 3-phosphate + L-glutamine = pyridoxal 5'-phosphate + L-glutamate + phosphate + 3 H2O + H(+). It functions in the pathway cofactor biosynthesis; pyridoxal 5'-phosphate biosynthesis. Catalyzes the formation of pyridoxal 5'-phosphate from ribose 5-phosphate (RBP), glyceraldehyde 3-phosphate (G3P) and ammonia. The ammonia is provided by the PdxT subunit. Can also use ribulose 5-phosphate and dihydroxyacetone phosphate as substrates, resulting from enzyme-catalyzed isomerization of RBP and G3P, respectively. The chain is Pyridoxal 5'-phosphate synthase subunit PdxS from Herpetosiphon aurantiacus (strain ATCC 23779 / DSM 785 / 114-95).